A 282-amino-acid chain; its full sequence is NADPH-dependent 7-cyano-7-deazaguanine reductase (282 aa).

88 to 90 (IES) lines the substrate pocket. 90–91 (SK) is a binding site for NADPH. Cysteine 189 (thioimide intermediate) is an active-site residue. Aspartate 196 serves as the catalytic Proton donor. 228 to 229 (HE) provides a ligand contact to substrate. Residue 257 to 258 (RG) coordinates NADPH.

The protein belongs to the GTP cyclohydrolase I family. QueF type 2 subfamily. As to quaternary structure, homodimer.

The protein localises to the cytoplasm. It catalyses the reaction 7-aminomethyl-7-carbaguanine + 2 NADP(+) = 7-cyano-7-deazaguanine + 2 NADPH + 3 H(+). The protein operates within tRNA modification; tRNA-queuosine biosynthesis. Its function is as follows. Catalyzes the NADPH-dependent reduction of 7-cyano-7-deazaguanine (preQ0) to 7-aminomethyl-7-deazaguanine (preQ1). In Photorhabdus laumondii subsp. laumondii (strain DSM 15139 / CIP 105565 / TT01) (Photorhabdus luminescens subsp. laumondii), this protein is NADPH-dependent 7-cyano-7-deazaguanine reductase.